The following is a 556-amino-acid chain: Endonuclease/exonuclease/phosphatase family domain-containing protein 1 (556 aa).

The region spanning 39 to 68 (ERLNINTATEEELMTLPGVTRQVAQNIVEY) is the HhH domain.

This Xenopus laevis (African clawed frog) protein is Endonuclease/exonuclease/phosphatase family domain-containing protein 1 (eepd1).